The following is a 766-amino-acid chain: Signal transducer and activator of transcription 3.2 (766 aa).

The short motif at 150 to 162 (DVRKKVQDLEQKM) is the Essential for nuclear import element. An SH2 domain is found at 580–670 (WNEGYIIGFI…DATNILVSPL (91 aa)). S725 is modified (phosphoserine; by NLK).

It belongs to the transcription factor STAT family. Forms a homodimer or a heterodimer with a related family member. Interacts with nlk.2. Post-translationally, phosphorylation of both tyrosine and serine residues, together with dimerization, is required for mesoderm induction.

It localises to the cytoplasm. The protein localises to the nucleus. In terms of biological role, transcription factor that binds to target promoter sequences and activates transcription upon il6st/gp130 stimulation. Mediates ventralization of embryos, at least in part via inhibition of smad2 signaling. Required for hairy2 to induce dll1/delta1 and promote neural crest cell proliferation and differentiation. Involved in TGFbeta-mediated mesoderm induction in early embryos, acting downstream of map3k7/tak1 and nlk.2. In Xenopus laevis (African clawed frog), this protein is Signal transducer and activator of transcription 3.2 (stat3.2).